We begin with the raw amino-acid sequence, 201 residues long: Recombination protein RecR (201 aa).

The C4-type zinc finger occupies 60 to 75; sequence CSRCGNVDTVDPCTVC. In terms of domain architecture, Toprim spans 83-178; the sequence is SVIIVVEDVA…KITRLAHGVP (96 aa).

This sequence belongs to the RecR family.

Functionally, may play a role in DNA repair. It seems to be involved in an RecBC-independent recombinational process of DNA repair. It may act with RecF and RecO. This Rhizobium rhizogenes (strain K84 / ATCC BAA-868) (Agrobacterium radiobacter) protein is Recombination protein RecR.